A 364-amino-acid polypeptide reads, in one-letter code: Ribosomal RNA large subunit methyltransferase F (364 aa).

Positions 1–17 are enriched in low complexity; it reads MPKPAIKTAAKPATSSA. Residues 1–53 are disordered; the sequence is MPKPAIKTAAKPATSSAGKRGKPITPKSVAKPQAAKPKTVSKPKVKPGEKKRL. Over residues 39–53 the composition is skewed to basic residues; the sequence is TVSKPKVKPGEKKRL.

It belongs to the methyltransferase superfamily. METTL16/RlmF family.

Its subcellular location is the cytoplasm. It carries out the reaction adenosine(1618) in 23S rRNA + S-adenosyl-L-methionine = N(6)-methyladenosine(1618) in 23S rRNA + S-adenosyl-L-homocysteine + H(+). In terms of biological role, specifically methylates the adenine in position 1618 of 23S rRNA. The polypeptide is Ribosomal RNA large subunit methyltransferase F (Shewanella sp. (strain MR-4)).